Here is a 161-residue protein sequence, read N- to C-terminus: Globin CTT-VIIB-6 (161 aa).

The signal sequence occupies residues 1–16 (MKFFAVLALCIVGAIA). Residues 18–161 (PLTADEASLV…NTFAIVVPRL (144 aa)) form the Globin domain. Residues histidine 76 and histidine 111 each contribute to the heme b site.

The protein belongs to the globin family. In terms of assembly, homodimer.

The polypeptide is Globin CTT-VIIB-6 (CTT-7B6) (Chironomus thummi thummi (Midge)).